Here is a 197-residue protein sequence, read N- to C-terminus: ATP-dependent Clp protease proteolytic subunit 3 (197 aa).

Residue Ser96 is the Nucleophile of the active site. The active site involves His121.

This sequence belongs to the peptidase S14 family. In terms of assembly, fourteen ClpP subunits assemble into 2 heptameric rings which stack back to back to give a disk-like structure with a central cavity, resembling the structure of eukaryotic proteasomes.

The protein resides in the cytoplasm. It carries out the reaction Hydrolysis of proteins to small peptides in the presence of ATP and magnesium. alpha-casein is the usual test substrate. In the absence of ATP, only oligopeptides shorter than five residues are hydrolyzed (such as succinyl-Leu-Tyr-|-NHMec, and Leu-Tyr-Leu-|-Tyr-Trp, in which cleavage of the -Tyr-|-Leu- and -Tyr-|-Trp bonds also occurs).. In terms of biological role, cleaves peptides in various proteins in a process that requires ATP hydrolysis. Has a chymotrypsin-like activity. Plays a major role in the degradation of misfolded proteins. In Prochlorococcus marinus (strain MIT 9313), this protein is ATP-dependent Clp protease proteolytic subunit 3.